The chain runs to 419 residues: NF-kappa-B essential modulator (419 aa).

The interval 1 to 197 is required for interaction with and ubiquitination by MARCHF2; sequence MNRHLWKSQL…REALQQQHSV (197 aa). Serine 31 and serine 43 each carry phosphoserine; by IKKB. Positions 44–111 are interaction with CHUK/IKBKB; it reads EQGAPETLQR…KLVERLGLEK (68 aa). Residues 49–356 are a coiled coil; that stretch reads ETLQRCLEEN…CQESARIEDM (308 aa). The residue at position 68 (serine 68) is a Phosphoserine. A Phosphoserine; by ATM modification is found at serine 85. Glycyl lysine isopeptide (Lys-Gly) (interchain with G-Cter in ubiquitin) cross-links involve residues lysine 111, lysine 139, lysine 143, lysine 226, lysine 246, and lysine 264. Residues 150–257 are interaction with TANK; it reads LGELQESQSR…SVVGSERKRG (108 aa). Residues 242 to 350 are ubiquitin-binding (UBAN); sequence DNHIKSSVVG…SKLKASCQES (109 aa). A self-association region spans residues 246–365; the sequence is KSSVVGSERK…MRKRHVEVSQ (120 aa). The segment at 251 to 419 is required for interaction with TNFAIP3; sequence GSERKRGMQL…LQIHVMECIE (169 aa). A Glycyl lysine isopeptide (Lys-Gly) (interchain with G-Cter in SUMO); alternate cross-link involves residue lysine 277. A Glycyl lysine isopeptide (Lys-Gly) (interchain with G-Cter in ubiquitin); alternate cross-link involves residue lysine 277. Glycyl lysine isopeptide (Lys-Gly) (interchain with G-Cter in ubiquitin) cross-links involve residues lysine 283, lysine 285, lysine 292, and lysine 302. Lysine 309 is covalently cross-linked (Glycyl lysine isopeptide (Lys-Gly) (interchain with G-Cter in SUMO); alternate). Lysine 309 participates in a covalent cross-link: Glycyl lysine isopeptide (Lys-Gly) (interchain with G-Cter in ubiquitin); alternate. Residues lysine 321 and lysine 325 each participate in a glycyl lysine isopeptide (Lys-Gly) (interchain with G-Cter in ubiquitin) cross-link. The interval 322–343 is leucine-zipper; sequence LAEKKELLQEQLEQLQREYSKL. A Glycyl lysine isopeptide (Lys-Gly) (interchain with G-Cter in ubiquitin and interchain with MARCHF2) cross-link involves residue lysine 326. The segment at 358 to 395 is disordered; sequence KRHVEVSQAPLPPAPAYLSSPLALPSQRRSPPEEPPDF. The span at 373–386 shows a compositional bias: low complexity; it reads AYLSSPLALPSQRR. Serine 376 is modified (phosphoserine; by IKKB). Residues 382–419 form an interaction with CYLD region; it reads PSQRRSPPEEPPDFCCPKCQYQAPDMDTLQIHVMECIE. Serine 387 carries the phosphoserine modification. Residues 389 to 419 form a CCHC NOA-type zinc finger; that stretch reads PEEPPDFCCPKCQYQAPDMDTLQIHVMECIE. Cysteine 397 contacts Zn(2+). A Glycyl lysine isopeptide (Lys-Gly) (interchain with G-Cter in ubiquitin) cross-link involves residue lysine 399. Cysteine 400, histidine 413, and cysteine 417 together coordinate Zn(2+).

As to quaternary structure, homodimer; disulfide-linked. Component of the I-kappa-B-kinase (IKK) core complex consisting of CHUK, IKBKB and IKBKG; probably four alpha/CHUK-beta/IKBKB dimers are associated with four gamma/IKBKG subunits. The IKK core complex seems to associate with regulatory or adapter proteins to form a IKK-signalosome holo-complex. The IKK complex associates with TERF2IP/RAP1, leading to promote IKK-mediated phosphorylation of RELA/p65. Part of a complex composed of NCOA2, NCOA3, CHUK/IKKA, IKBKB, IKBKG and CREBBP. Interacts with COPS3, CYLD, NALP2, TRPC4AP and PIDD1. Interacts with ATM; the complex is exported from the nucleus. Interacts with TRAF6. Interacts with IKBKE. Interacts with TANK; the interaction is enhanced by IKBKE and TBK1. Part of a ternary complex consisting of TANK, IKBKB and IKBKG. Interacts with ZFAND5. Interacts with RIPK2. Interacts with TNIP1 and TNFAIP3; TNIP1 facilitates the TNFAIP3-mediated de-ubiquitination of IKBKG. Interacts with TNFAIP3; the interaction is induced by TNF stimulation and by polyubiquitin. Binds (via UBAN region) polyubiquitin; binds both 'Lys-63'-linked and linear polyubiquitin, with higher affinity for linear ubiquitin. Interacts with NLRP10. Interacts with TANK; this interaction increases in response to DNA damage. Interacts with USP10; this interaction increases in response to DNA damage. Interacts with ZC3H12A; this interaction increases in response to DNA damage. Interacts with IFIT5; the interaction synergizes the recruitment of IKK to MAP3K7 and enhances IKK phosphorylation. Interacts with TRIM29; this interaction induces IKBKG/NEMO ubiquitination and proteolytic degradation. Interacts with TRIM13; this interaction leads to IKBKG/NEMO ubiquitination. Interacts with ARFIP2. Interacts with RIPK1. Interacts with (ubiquitinated) BCL10; interaction with polyubiquitinated BCL10 via both 'Lys-63'-linked and linear ubiquitin is required for TCR-induced NF-kappa-B activation. Interacts with MARCHF2; during the late stages of macrophage viral and bacterial infection; the interaction leads to ubiquitination and degradation of IKBKG/NEMO. In terms of assembly, (Microbial infection) Interacts with Molluscum contagiosum virus protein MC005; this interaction inhibits NF-kappa-B activation. (Microbial infection) Interacts with HTLV-1 Tax oncoprotein; the interaction activates IKBKG. As to quaternary structure, (Microbial infection) Interacts with Shigella flexneri ipah9.8; the interaction promotes TNIP1-dependent 'Lys-27'-linked polyubiquitination of IKBKG which perturbs NF-kappa-B activation during bacterial infection. In terms of assembly, (Microbial infection) Interacts with SARS coronavirus-2/SARS-CoV-2 virus protein ORF9B (via N-terminus); the interaction inhibits polyubiquitination through 'Lys-63' and NF-kappa-B activation. Phosphorylation at Ser-68 attenuates aminoterminal homodimerization. In terms of processing, polyubiquitinated on Lys-285 via 'Lys-63'-linked ubiquitin; the ubiquitination is mediated downstream of NOD2 and RIPK2 and probably plays a role in signaling by facilitating interactions with ubiquitin domain-containing proteins and activates the NF-kappa-B pathway. Polyubiquitinated on Lys-285 and Lys-399 through 'Lys-63'-linked ubiquitin; the ubiquitination is mediated by BCL10, MALT1 and TRAF6 and probably plays a role in signaling by facilitating interactions with ubiquitin domain-containing proteins and activates the NF-kappa-B pathway. Monoubiquitinated on Lys-277 and Lys-309; promotes nuclear export. Polyubiquitinated through 'Lys-27' by TRIM23; involved in antiviral innate and inflammatory responses. Linear polyubiquitinated on Lys-111, Lys-143, Lys-226, Lys-246, Lys-264, Lys-277, Lys-285, Lys-292, Lys-302, Lys-309 and Lys-326; the head-to-tail polyubiquitination is mediated by the LUBAC complex and plays a key role in NF-kappa-B activation. Deubiquitinated by USP10 in a TANK-dependent and -independent manner, leading to the negative regulation of NF-kappa-B signaling upon DNA damage. Ubiquitinated at Lys-326 by MARCHF2 following bacterial and viral infection which leads to its degradation. Polyubiquitinated via 'Lys-29'-linked ubiquitin; leading to lysosomal degradation. Post-translationally, sumoylated on Lys-277 and Lys-309 with SUMO1; the modification results in phosphorylation of Ser-85 by ATM leading to a replacement of the sumoylation by mono-ubiquitination on these residues. Neddylated by TRIM40, resulting in stabilization of NFKBIA and down-regulation of NF-kappa-B activity. In terms of processing, (Microbial infection) Cleaved by hepatitis A virus (HAV) protease 3C allowing the virus to disrupt the host innate immune signaling. Post-translationally, (Microbial infection) Deubiquitinated by Epstein-Barr virus BPLF1 on both 'Lys-48' and 'Lys-63'-linked ubiquitin chains; leading to NF-kappa-B signaling inhibition. (Microbial infection) Polyubiquitinated on Lys-309 and Lys-321 via 'Lys-27'-linked ubiquitin by Shigella flexneri E3 ubiquitin-protein ligase ipah9.8, leading to its degradation by the proteasome. In terms of processing, (Microbial infection) Polyubiquitination through 'Lys-63' is interrupted by interaction with SARS coronavirus-2/SARS-CoV-2 virus protein ORF9B which inhibits the NF-kappa-B pathway. Heart, brain, placenta, lung, liver, skeletal muscle, kidney and pancreas.

The protein localises to the cytoplasm. Its subcellular location is the nucleus. Regulatory subunit of the IKK core complex which phosphorylates inhibitors of NF-kappa-B thus leading to the dissociation of the inhibitor/NF-kappa-B complex and ultimately the degradation of the inhibitor. Its binding to scaffolding polyubiquitin plays a key role in IKK activation by multiple signaling receptor pathways. Can recognize and bind both 'Lys-63'-linked and linear polyubiquitin upon cell stimulation, with a much higher affinity for linear polyubiquitin. Could be implicated in NF-kappa-B-mediated protection from cytokine toxicity. Essential for viral activation of IRF3. Involved in TLR3- and IFIH1-mediated antiviral innate response; this function requires 'Lys-27'-linked polyubiquitination. In terms of biological role, (Microbial infection) Also considered to be a mediator for HTLV-1 Tax oncoprotein activation of NF-kappa-B. The sequence is that of NF-kappa-B essential modulator from Homo sapiens (Human).